The primary structure comprises 285 residues: Small ribosomal subunit protein uS2 (285 aa).

The segment at 229–285 (AGLASGDAKPEAGAGEPLAEWEQELLAQANPNAEGSAEAAPAAATEEAPAAQTPADF) is disordered. Positions 257 to 285 (ANPNAEGSAEAAPAAATEEAPAAQTPADF) are enriched in low complexity.

Belongs to the universal ribosomal protein uS2 family.

The chain is Small ribosomal subunit protein uS2 from Nocardia farcinica (strain IFM 10152).